Consider the following 185-residue polypeptide: HTH-type transcriptional regulator Hpr (185 aa).

In terms of domain architecture, HTH marR-type spans 13 to 157; sequence AMIFSQRIAQ…LIAILRNIYG (145 aa). A DNA-binding region (H-T-H motif) is located at residues 63 to 86; sequence ISEIAKFGVMHVSTAFNFSKKLEE.

As to quaternary structure, homodimer.

Its function is as follows. Negative regulator of protease production and sporulation. This Bacillus cereus (strain G9842) protein is HTH-type transcriptional regulator Hpr.